The chain runs to 343 residues: Leucine-rich repeat-containing protein 39 (343 aa).

LRR repeat units lie at residues 64–87 (EEGR…LVQL), 88–110 (SQIQ…ISSF), 111–133 (QSLI…IGKL), 134–156 (TRLR…LGCC), 158–180 (NLEK…LSNL), 181–203 (KKLS…VVNL), 204–226 (PSLE…IHRM), 228–249 (KLHT…ISRM), 250–274 (KSLD…GMSN), and 275–295 (LRFV…PDLN).

It is found in the cytoplasm. The protein resides in the myofibril. The protein localises to the sarcomere. Its subcellular location is the m line. Its function is as follows. Component of the sarcomeric M-band which plays a role in myocyte response to biomechanical stress. May regulate expression of other M-band proteins via an SRF-dependent pathway. Important for normal contractile function in heart. The polypeptide is Leucine-rich repeat-containing protein 39 (Danio rerio (Zebrafish)).